A 387-amino-acid chain; its full sequence is WD repeat-containing protein 89 (387 aa).

WD repeat units follow at residues 21–65 (KEPT…VLRE), 68–107 (GYPG…EKPV), 112–156 (GYPS…QNLS), 168–208 (THSD…EEDA), 214–254 (NSIS…TDEP), and 319–358 (GHAA…KTFT).

In Homo sapiens (Human), this protein is WD repeat-containing protein 89 (WDR89).